The sequence spans 348 residues: MNTRIGTTGNASPLAADAYPMIDPFGRAVTYLRVSVTDRCDFRCTYCMAENMTFLPKKDLLTLEELDRLCSAFIAKGVRKIRLTGGEPLVRKNIMYLVRQLGKKIGAGLDELTLTTNGSQLSRHAEELYECGVRRINVSLDTLDPEKFRKITRWGDFSKVMEGIDAAQKAGIRIKLNAVALKGFNDAEIPDLLRFAHGRGMDLTVIETMPMGEIDEDRTDQYLPLSELRADLEKQFTLTDIDYQTGGPARYVRVEETGGRLGFITPMTHNFCESCNRVRLTCTGTLYMCLGQNDAADLRAALRATEDDALLHTAIDEAITRKPKGHDFIIDRTHNRPAVARHMSVTGG.

In terms of domain architecture, Radical SAM core spans 24-242; sequence PFGRAVTYLR…EKQFTLTDID (219 aa). R33 serves as a coordination point for GTP. The [4Fe-4S] cluster site is built by C40 and C44. Y46 is a binding site for S-adenosyl-L-methionine. Residue C47 participates in [4Fe-4S] cluster binding. Residue R82 coordinates GTP. G86 lines the S-adenosyl-L-methionine pocket. T115 is a GTP binding site. S139 is a binding site for S-adenosyl-L-methionine. A GTP-binding site is contributed by K175. M209 contacts S-adenosyl-L-methionine. [4Fe-4S] cluster is bound by residues C272 and C275. 277-279 lines the GTP pocket; sequence RVR. C289 contributes to the [4Fe-4S] cluster binding site.

Belongs to the radical SAM superfamily. MoaA family. In terms of assembly, monomer and homodimer. The cofactor is [4Fe-4S] cluster.

It catalyses the reaction GTP + AH2 + S-adenosyl-L-methionine = (8S)-3',8-cyclo-7,8-dihydroguanosine 5'-triphosphate + 5'-deoxyadenosine + L-methionine + A + H(+). It functions in the pathway cofactor biosynthesis; molybdopterin biosynthesis. Its function is as follows. Catalyzes the cyclization of GTP to (8S)-3',8-cyclo-7,8-dihydroguanosine 5'-triphosphate. This Rhizobium etli (strain CIAT 652) protein is GTP 3',8-cyclase.